Consider the following 159-residue polypeptide: Phosphopantetheine adenylyltransferase (159 aa).

T9 lines the substrate pocket. ATP-binding positions include 9-10 (TF) and H17. Substrate-binding residues include K41, L73, and R87. Residues 88–90 (GLR), E98, and 123–129 (YSFISST) each bind ATP.

This sequence belongs to the bacterial CoaD family. Homohexamer. Requires Mg(2+) as cofactor.

The protein resides in the cytoplasm. It catalyses the reaction (R)-4'-phosphopantetheine + ATP + H(+) = 3'-dephospho-CoA + diphosphate. The protein operates within cofactor biosynthesis; coenzyme A biosynthesis; CoA from (R)-pantothenate: step 4/5. Reversibly transfers an adenylyl group from ATP to 4'-phosphopantetheine, yielding dephospho-CoA (dPCoA) and pyrophosphate. In Pseudomonas putida (strain ATCC 700007 / DSM 6899 / JCM 31910 / BCRC 17059 / LMG 24140 / F1), this protein is Phosphopantetheine adenylyltransferase.